We begin with the raw amino-acid sequence, 256 residues long: uncharacterized protein (256 aa).

The 56-residue stretch at P7 to L62 folds into the HTH deoR-type domain. A DNA-binding region (H-T-H motif) is located at residues I24–D43.

This is an uncharacterized protein from Haemophilus influenzae (strain ATCC 51907 / DSM 11121 / KW20 / Rd).